Here is a 289-residue protein sequence, read N- to C-terminus: 4-hydroxy-tetrahydrodipicolinate synthase (289 aa).

Thr-46 contacts pyruvate. The active-site Proton donor/acceptor is the Tyr-134. The active-site Schiff-base intermediate with substrate is Lys-162. Val-204 serves as a coordination point for pyruvate.

It belongs to the DapA family. As to quaternary structure, homotetramer; dimer of dimers.

It localises to the cytoplasm. The catalysed reaction is L-aspartate 4-semialdehyde + pyruvate = (2S,4S)-4-hydroxy-2,3,4,5-tetrahydrodipicolinate + H2O + H(+). It functions in the pathway amino-acid biosynthesis; L-lysine biosynthesis via DAP pathway; (S)-tetrahydrodipicolinate from L-aspartate: step 3/4. Catalyzes the condensation of (S)-aspartate-beta-semialdehyde [(S)-ASA] and pyruvate to 4-hydroxy-tetrahydrodipicolinate (HTPA). The polypeptide is 4-hydroxy-tetrahydrodipicolinate synthase (Bacillus velezensis (strain DSM 23117 / BGSC 10A6 / LMG 26770 / FZB42) (Bacillus amyloliquefaciens subsp. plantarum)).